The sequence spans 458 residues: V-type ATP synthase beta chain (458 aa).

It belongs to the ATPase alpha/beta chains family.

Functionally, produces ATP from ADP in the presence of a proton gradient across the membrane. The V-type beta chain is a regulatory subunit. In Fusobacterium nucleatum subsp. nucleatum (strain ATCC 25586 / DSM 15643 / BCRC 10681 / CIP 101130 / JCM 8532 / KCTC 2640 / LMG 13131 / VPI 4355), this protein is V-type ATP synthase beta chain.